Consider the following 1251-residue polypeptide: Myosin-1 (1251 aa).

Positions 1–37 (MGQSKRPFKNKEEKKSRGFGRSRHDDAGAGGRPQVKK) are disordered. Basic and acidic residues predominate over residues 9 to 27 (KNKEEKKSRGFGRSRHDDA). A Myosin motor domain is found at 48-727 (IGVSDLTLLS…TLFALEHMRD (680 aa)). ATP is bound at residue 141–148 (GESGAGKT). Position 369 is a phosphoserine (Ser369). An actin-binding region spans residues 416-498 (TIGILDIYGF…PGVFAALNDA (83 aa)). 2 IQ domains span residues 731 to 751 (HNMATRIQRAWRNYLRYRTEC) and 752 to 777 (AIRIQRFWRRVTGGLEFIKLRDQGHK). In terms of domain architecture, TH1 spans 785–980 (RRRYSLVGSR…PGEPANSVSK (196 aa)). Disordered stretches follow at residues 958–1093 (RDDV…SNEL) and 1135–1227 (AKTP…ASIA). Low complexity predominate over residues 1040–1052 (VAQSVTAVAAAHA). Pro residues predominate over residues 1061–1073 (RPPPPPPPTQPPA). Residues 1074–1135 (PKKDTAKALY…PEAYLEPIVA (62 aa)) enclose the SH3 domain. Residues 1139–1148 (SLPPPPPSLP) show a composition bias toward pro residues. 2 stretches are compositionally biased toward polar residues: residues 1150–1161 (QSKSAVSNTLPN) and 1216–1225 (ATPSSLSNAS).

The protein belongs to the TRAFAC class myosin-kinesin ATPase superfamily. Myosin family. Phosphorylation of the TEDS site (Ser-369) is required for the polarization of the actin cytoskeleton. Phosphorylation probably activates the myosin-I ATPase activity.

The protein resides in the cytoplasm. The protein localises to the cytoskeleton. It is found in the actin patch. Its function is as follows. Type-I myosin implicated in the organization of the actin cytoskeleton. Required for proper actin cytoskeleton polarization. At the cell cortex, assembles in patch-like structures together with proteins from the actin-polymerizing machinery and promotes actin assembly. Functions as actin nucleation-promoting factor (NPF) for the Arp2/3 complex. The chain is Myosin-1 (MYO1) from Coccidioides immitis (strain RS) (Valley fever fungus).